Here is a 210-residue protein sequence, read N- to C-terminus: S-norcoclaurine synthase (210 aa).

An N-terminal signal peptide occupies residues Met-1–Cys-19. Tyr-108–Glu-110 serves as a coordination point for dopamine. The Proton donor role is filled by Lys-122. Position 141 (Asp-141) interacts with (4-hydroxyphenyl)acetaldehyde.

The protein belongs to the BetVI family. Concentration-dependent dimerization, but mainly monomeric at concentrations around 10 uM. As to expression, expressed most abundantly in the rhizomes and to a lesser extent in petioles, roots, leaves and flower buds.

It carries out the reaction (4-hydroxyphenyl)acetaldehyde + dopamine = (S)-norcoclaurine + H2O. Involved in the biosynthesis of the common precursor of all benzylisoquinoline alkaloids such as morphine, sanguinarine, codeine or berberine. Condenses dopamine and 4-hydroxyphenylacetaldehyde. The protein is S-norcoclaurine synthase of Thalictrum flavum subsp. glaucum (Yellow meadow rue).